The chain runs to 706 residues: Cyclic nucleotide-gated ion channel 18 (706 aa).

Residues 1 to 53 (MNKIRSLRCLLPETITSASTAASNRGSDGSQFSVLWRHQILDPDSNIVTYWNH) are Cytoplasmic-facing. The helical transmembrane segment at 54–74 (VFLITSILALFLDPFYFYVPY) threads the bilayer. Residues 75 to 86 (VGGPACLSIDIS) are Extracellular-facing. The helical transmembrane segment at 87–107 (LAATVTFFRTVADIFHLLHIF) threads the bilayer. Residues 108–142 (MKFRTAFVARSSRVFGRGELVMDSREIAMRYLKTD) are Cytoplasmic-facing. A helical transmembrane segment spans residues 143 to 163 (FLIDVAAMLPLPQLVIWLVIP). The Extracellular portion of the chain corresponds to 164-174 (AATNGTANHAN). A helical membrane pass occupies residues 175–195 (STLALIVLVQYIPRSFIIFPL). The Cytoplasmic segment spans residues 196–217 (NQRIIKTTGFIAKTAWAGAAYN). The chain crosses the membrane as a helical span at residues 218-238 (LLLYILASHVLGAMWYLSSIG). Over 239–345 (RQFSCWSNVC…ITTSVYLGET (107 aa)) the chain is Extracellular. A helical transmembrane segment spans residues 346-366 (LFCITICIFGLILFTLLIGNM). Residues 367–706 (QSSLQSMSVR…PDFSIDKEDV (340 aa)) lie on the Cytoplasmic side of the membrane. A nucleoside 3',5'-cyclic phosphate-binding positions include 449 to 579 (FFSQ…AFRY) and E520. Positions 565 to 580 (FKRLQSKKLQHAFRYY) are calmodulin-binding. The region spanning 585–614 (RAWGACFVQSAWRRYKRRKLAKELSLHESS) is the IQ domain. The interval 661 to 706 (ANTRRGTNQKASSSSTGKKDGSSTSLKMPQLFKPDEPDFSIDKEDV) is disordered. Positions 693 to 706 (KPDEPDFSIDKEDV) are enriched in basic and acidic residues.

It belongs to the cyclic nucleotide-gated cation channel (TC 1.A.1.5) family. Homomultimer. Interacts with CPK32. In terms of tissue distribution, expressed in pollen grains. Not detected in leaves, roots or root hairs.

It localises to the cell membrane. Its subcellular location is the cytoplasmic vesicle membrane. Cyclic nucleotide-gated ion channel required for directional pollen tube growth into the transmitting tract. Acts as a Ca(2+)-permeable divalent cation-selective channel inhibited by either lanthanum or gadolinium. Regulated by CPK32 to mediate Ca(2+) transport across the plasma membrane in response to Ca(2+) oscillation. In Arabidopsis thaliana (Mouse-ear cress), this protein is Cyclic nucleotide-gated ion channel 18.